We begin with the raw amino-acid sequence, 54 residues long: Large ribosomal subunit protein bL33 (54 aa).

It belongs to the bacterial ribosomal protein bL33 family.

The protein is Large ribosomal subunit protein bL33 of Opitutus terrae (strain DSM 11246 / JCM 15787 / PB90-1).